The chain runs to 271 residues: ATP synthase subunit a (271 aa).

5 consecutive transmembrane segments (helical) span residues 38–58 (FWTL…LFLV), 100–120 (LIAP…LMDL), 146–166 (DVNI…FYSI), 220–240 (LIFI…LNVP), and 242–262 (AIFH…LTIV).

The protein belongs to the ATPase A chain family. F-type ATPases have 2 components, CF(1) - the catalytic core - and CF(0) - the membrane proton channel. CF(1) has five subunits: alpha(3), beta(3), gamma(1), delta(1), epsilon(1). CF(0) has three main subunits: a(1), b(2) and c(9-12). The alpha and beta chains form an alternating ring which encloses part of the gamma chain. CF(1) is attached to CF(0) by a central stalk formed by the gamma and epsilon chains, while a peripheral stalk is formed by the delta and b chains.

The protein localises to the cell inner membrane. Functionally, key component of the proton channel; it plays a direct role in the translocation of protons across the membrane. The sequence is that of ATP synthase subunit a from Salmonella choleraesuis (strain SC-B67).